Consider the following 378-residue polypeptide: Isobutylamine N-hydroxylase (378 aa).

Exists in dimeric or trimeric form depending upon buffer conditions. It can form an isobutylamine N-hydroxylase two component enzyme system formed of a flavin reductase component (VlmR) and a monooxygenase component (VlmH).

It carries out the reaction 2-methylpropan-1-amine + FADH2 + O2 = N-(2-methylpropyl)hydroxylamine + FAD + H2O + 2 H(+). The catalysed reaction is 2-methylpropan-1-amine + FMNH2 + O2 = N-(2-methylpropyl)hydroxylamine + FMN + H2O + 2 H(+). Inhibited by 5',5'-dithio-bis(2-nitrobenzoic acid) (DTNB) and 4-(hydroxymercuri)benzoic acid (p-HMB). Its function is as follows. Involved in the biosynthesis of the azoxy antibiotic valanimycin, which has an antitumor activity. Catalyzes the oxidation of isobutylamine to isobutylhydroxylamine via the formation of a flavin 4a-hydroperoxide. Unlike other known N-hydroxylases, isobutylamine N-hydroxylase cannot carry out the reduction of the flavin cofactor and requires the NADPH-flavin oxidoreductase VlmR. Also able to oxidize propan-1-amine, butan-1-amine, butan-2-amine and benzylamine. It has a similar activity with either FMNH(2) or FADH(2). The polypeptide is Isobutylamine N-hydroxylase (Streptomyces viridifaciens).